A 735-amino-acid polypeptide reads, in one-letter code: Catalase-peroxidase (735 aa).

The tract at residues 1-31 (MENNTNPISGQGKCPFSGGAAKQSAGAGTRN) is disordered. The segment covering 17 to 28 (SGGAAKQSAGAG) has biased composition (low complexity). The segment at residues 103–226 (WHSAGTYRVA…LAAVQMGLIY (124 aa)) is a cross-link (tryptophyl-tyrosyl-methioninium (Trp-Tyr) (with M-252)). The Proton acceptor role is filled by His-104. Residues 226–252 (YVNPEGPNGNPDPLASARDIRETFARM) constitute a cross-link (tryptophyl-tyrosyl-methioninium (Tyr-Met) (with W-103)). Residue His-267 participates in heme b binding. The segment at 352 to 371 (KPKNGAGAGTVPDAHNSSKS) is disordered.

It belongs to the peroxidase family. Peroxidase/catalase subfamily. As to quaternary structure, homodimer or homotetramer. The cofactor is heme b. Formation of the three residue Trp-Tyr-Met cross-link is important for the catalase, but not the peroxidase activity of the enzyme.

It carries out the reaction H2O2 + AH2 = A + 2 H2O. The enzyme catalyses 2 H2O2 = O2 + 2 H2O. Functionally, bifunctional enzyme with both catalase and broad-spectrum peroxidase activity. In Flavobacterium psychrophilum (strain ATCC 49511 / DSM 21280 / CIP 103535 / JIP02/86), this protein is Catalase-peroxidase.